The primary structure comprises 1377 residues: Dicer-like protein 2 (1377 aa).

The Helicase ATP-binding domain occupies 23 to 203; the sequence is MFEASLKENI…MKTLESNLDS (181 aa). ATP is bound at residue 36 to 43; it reads MDTGTGKT. The short motif at 144–147 is the DEAH box element; it reads DEAH. Residues 368–531 form the Helicase C-terminal domain; that stretch reads ALINFLDKFD…AYQDEERRLR (164 aa). The 95-residue stretch at 561 to 655 folds into the Dicer dsRNA-binding fold domain; that stretch reads VVTHLYHFCA…LPLTKNPEMR (95 aa). RNase III domains follow at residues 914 to 1052 and 1092 to 1275; these read RLCA…LDGG and DGDL…VDSG. The Mg(2+) site is built by Glu1131, Asp1261, and Glu1264.

The protein belongs to the helicase family. Dicer subfamily. The cofactor is Mg(2+). Mn(2+) serves as cofactor.

Dicer-like endonuclease involved in cleaving double-stranded RNA in the RNA interference (RNAi) pathway. Produces 21 to 25 bp dsRNAs (siRNAs) which target the selective destruction of homologous RNAs leading to sequence-specific suppression of gene expression, called post-transcriptional gene silencing (PTGS). Part of a broad host defense response against viral infection and transposons. The protein is Dicer-like protein 2 (dcl2) of Aspergillus oryzae (strain ATCC 42149 / RIB 40) (Yellow koji mold).